Consider the following 635-residue polypeptide: ADP-ribosylation factor-binding protein GGA1 (635 aa).

Position 1 is an N-acetylmethionine (Met-1). Residues 17-147 enclose the VHS domain; the sequence is ATNPLNKELN…MLKKQGIVKS (131 aa). The interval 114–273 is interaction with ARF3; that stretch reads KILELLYSWT…RLASDTEDND (160 aa). The GAT domain maps to 171–298; it reads DEEKSKMLAR…VINLYKQLVR (128 aa). Residue Ser-185 is modified to Phosphoserine. The unstructured hinge stretch occupies residues 299-505; that stretch reads GEEVNGDATA…ITVPLESIKP (207 aa). The interval 305–349 is disordered; sequence DATASSIPGSTSALLDLSGLDLPPPGTTQPATPTRPGNQSSPEQL. Positions 313-325 are enriched in low complexity; that stretch reads GSTSALLDLSGLD. Phosphoserine is present on Ser-354. Residues 357–361 carry the Autoinhibitory motif; it reads DDELM. Disordered stretches follow at residues 362 to 422 and 455 to 490; these read SLGL…LDDL and RDLQSKSSSPSPGAASLLHTTSPEPPGPPPQATPTE. Residues 383 to 393 are compositionally biased toward polar residues; the sequence is NFQSSDGTESS. Phosphoserine is present on Ser-417. Low complexity predominate over residues 459 to 476; that stretch reads SKSSSPSPGAASLLHTTS. Residues 477–486 are compositionally biased toward pro residues; the sequence is PEPPGPPPQA. The GAE domain occupies 506-627; it reads SSILPVTVYD…NEMGDVDQFP (122 aa).

This sequence belongs to the GGA protein family. As to quaternary structure, monomer. Interacts with GGA2 and GGA3. Binds to clathrin and activated ARFs, including ARF1, ARF5 and ARF6. Interacts with RABEP1 and RABGEF1. Interacts with the type-I membrane proteins LRP3, M6PR/CD-MPR and IGF2R/CI-MPR. Interacts (via N-terminal VHS domain) with SORL1/sorLA and SORT1 (via C-terminal cytosolic domain). Interacts with EPN4. Interacts with CCDC91. Interacts with HEATR5B/p200a. Interacts with SYNRG/gamma-synergin. Interacts (via GAE doamin) with NECAP1 and NECAP2. Interacts (via GAE domain) with AFTPH/aftiphilin. Interacts with TSG101 and UBC. Interacts with RNF11. Interacts (via VHS domain) with BACE1 (via DXXLL motif); the interaction highly increases when BACE1 is phosphorylated at 'Ser-498'. Interacts with CNST. Interacts with ADRA2B. Interacts with ARL3; the interaction recruits, in collaboration with RABEP1, PKD1:PKD2 complex to trans-Golgi network and is required for ciliary targeting. Post-translationally, phosphorylated by CK2 and dephosphorylated by PP2A. Phosphorylation of GGA1 allows the internal DXXLL motif to bind the VHS domain and to inhibit the recognition of cargo signals. In terms of processing, ubiquitinated.

The protein localises to the golgi apparatus. It is found in the trans-Golgi network membrane. Its subcellular location is the endosome membrane. The protein resides in the early endosome membrane. Plays a role in protein sorting and trafficking between the trans-Golgi network (TGN) and endosomes. Mediates the ARF-dependent recruitment of clathrin to the TGN and binds ubiquitinated proteins and membrane cargo molecules with a cytosolic acidic cluster-dileucine (DXXLL) motif. Mediates export of the GPCR receptor ADRA2B to the cell surface. Required for targeting PKD1:PKD2 complex from the trans-Golgi network to the cilium membrane. Regulates retrograde transport of proteins such as phosphorylated form of BACE1 from endosomes to the trans-Golgi network. The sequence is that of ADP-ribosylation factor-binding protein GGA1 (Gga1) from Mus musculus (Mouse).